The following is a 919-amino-acid chain: uncharacterized protein (919 aa).

A compositionally biased stretch (low complexity) spans 1-15 (MEALILLSSQQSGSI). Disordered stretches follow at residues 1-167 (MEAL…DLEN), 179-312 (RFKP…STPS), 415-491 (HIYE…RLSL), 553-739 (QQQQ…TIKP), 751-863 (THNE…NNII), and 883-906 (LNIN…DHIN). Polar residues predominate over residues 16-25 (KNNCASTSDI). Composition is skewed to low complexity over residues 34–75 (IVIV…SSSS), 96–107 (SSPSSSPNTPKT), and 141–153 (TPTT…TPIK). A compositionally biased stretch (basic and acidic residues) spans 154 to 167 (PVKDPKEKEKDLEN). The span at 186–292 (NNTNNNNNIN…QQSSPTSSQT (107 aa)) shows a compositional bias: low complexity. Residues 420–433 (PNENNNGGSFQKPN) are compositionally biased toward polar residues. 4 stretches are compositionally biased toward low complexity: residues 450–471 (GVSG…PSHP), 553–564 (QQQQQQQQQSSS), 573–589 (SQPQ…QTPQ), and 618–635 (HMPQ…MPHS). The span at 678 to 695 (YGSSPNLNGGKGSNNFLQ) shows a compositional bias: polar residues. The segment covering 712 to 723 (SSVDSYSNSSPT) has biased composition (low complexity). Residues 754–768 (ENYMSSPRQPLSPHN) are compositionally biased toward polar residues. A compositionally biased stretch (basic and acidic residues) spans 785–797 (PHEHCNYIDKNDE). The segment covering 798–863 (YYSNNNNNNN…NNNNNNNNII (66 aa)) has biased composition (low complexity). The segment covering 883–899 (LNINHQDGPNSASSTPR) has biased composition (polar residues).

This is an uncharacterized protein from Dictyostelium discoideum (Social amoeba).